We begin with the raw amino-acid sequence, 296 residues long: CCAAT/enhancer-binding protein beta (296 aa).

Residues Met1–Met22 are required for Lys-133 sumoylation. An Asymmetric dimethylarginine; by CARM1 modification is found at Arg3. The segment at Met22 to Ala104 is required for MYC transcriptional repression. Lys39 is subject to N6-acetyllysine; alternate. Residue Lys39 is modified to N6-methylated lysine; alternate. Residues Lys98 and Lys101 each carry the N6-acetyllysine; by KAT2A and KAT2B modification. An N6-acetyllysine; by KAT2A and KAT2B; alternate modification is found at Lys102. Residues Lys102 and Lys133 each participate in a glycyl lysine isopeptide (Lys-Gly) (interchain with G-Cter in SUMO2); alternate cross-link. Lys133 participates in a covalent cross-link: Glycyl lysine isopeptide (Lys-Gly) (interchain with G-Cter in SUMO); alternate. Residue Lys144 forms a Glycyl lysine isopeptide (Lys-Gly) (interchain with G-Cter in SUMO2) linkage. The segment at Ser171–Ala199 is disordered. Phosphothreonine; by GSK3-beta is present on Thr179. Ser180 and Ser181 each carry an O-linked (GlcNAc) serine glycan. Ser184 is modified (phosphoserine; by GSK3-beta). Thr188 is modified (phosphothreonine; by RPS6KA1, CDK2 and MAPK). Glycyl lysine isopeptide (Lys-Gly) (interchain with G-Cter in SUMO2) cross-links involve residues Lys211 and Lys213. Thr217 is modified (phosphothreonine; by RPS6KA1 and PKC/PRKCA). A bZIP domain is found at Ser222 to Leu285. The basic motif stretch occupies residues Lys226 to Arg246. Ser239 carries the post-translational modification Phosphoserine; by PKC/PRKCA. The interval Leu248–Leu255 is leucine-zipper. Ser276 is modified (phosphoserine; by CaMK2). Residue Lys283 forms a Glycyl lysine isopeptide (Lys-Gly) (interchain with G-Cter in SUMO2) linkage.

It belongs to the bZIP family. C/EBP subfamily. As to quaternary structure, binds DNA as a homodimer and as a heterodimer. Interacts with ATF4. Binds DNA as a heterodimer with ATF4. Interacts with MYB; within the complex, MYB and CEBPB bind to different promoter regions. Can form stable heterodimers with CEBPA, CEBPD and CEBPE. Interacts with SIX1. Isoform 2 and isoform 3 also form heterodimers. Interacts with TRIM28 and PTGES2. Interacts with PRDM16. Interacts with CCDC85B. Forms a complex with THOC5. Interacts with ZNF638; this interaction increases transcriptional activation. Interacts with CIDEA and CIDEC. Interaction with CIDEA increases transcriptional activation of a subset of CEBPB downstream target genes, including ID2, IGF1, PRLR, SOCS1, SOCS3, XDH. Interaction with CIDEC increases transcriptional activation of SOCS1, SOCS3, TGFB1, TGFBR1, ID2 and XDH. Interacts with DDIT3/CHOP. Interacts with EP300; recruits EP300 to chromatin. Interacts with RORA; the interaction disrupts interaction with EP300. Interacts (not methylated) with MED23, MED26, SMARCA2, SMARCB1 and SMARCC1. Interacts with KAT2A and KAT2B. Interacts with ATF5; EP300 is required for ATF5 and CEBPB interaction and DNA binding. Interacts with NFE2L1; the heterodimer represses expression of DSPP during odontoblast differentiation. Sumoylated by polymeric chains of SUMO2 or SUMO3. Sumoylation at Lys-133 is required for inhibition of T-cells proliferation. In adipocytes, sumoylation at Lys-133 by PIAS1 leads to ubiquitination and subsequent proteasomal degradation. Desumoylated by SENP2, which abolishes ubiquitination and stabilizes protein levels. Post-translationally, ubiquitinated, leading to proteasomal degradation. In terms of processing, phosphorylated at Thr-188 by MAPK and CDK2, serves to prime phosphorylation at Thr-179 and Ser-184 by GSK3B and acquire DNA-binding as well as transactivation activities, required to induce adipogenesis. MAPK and CDK2 act sequentially to maintain Thr-188 in the primed phosphorylated state during mitotical cloning expansion and thereby progression of terminal differentiation. Phosphorylation at Thr-217 enhances transactivation activity. Phosphorylation at Ser-276 in response to calcium increases transactivation activity. Phosphorylated at Thr-188 by RPS6KA1. O-glycosylated, glycosylation at Ser-180 and Ser-181 prevents phosphorylation on Thr-188, Ser-184 and Thr-179 and DNA binding activity which delays the adipocyte differentiation program. Post-translationally, acetylated. Acetylation at Lys-39 is an important and dynamic regulatory event that contributes to its ability to transactivate target genes, including those associated with adipogenesis and adipocyte function. Deacetylation by HDAC1 represses its transactivation activity. Acetylated by KAT2A and KAT2B within a cluster of lysine residues between amino acids 98-102, this acetylation is strongly induced by glucocorticoid treatment and enhances transactivation activity. In terms of processing, methylated. Methylation at Arg-3 by CARM1 and at Lys-39 by EHMT2, inhibits transactivation activity. Methylation is probably inhibited by phosphorylation at Thr-188. In terms of tissue distribution, abundantly expressed in myoblasts. Enriched in brown adipose tissue (BAT) versus white adipose tissue (WAT). Expressed in hepatocytes (at protein level). Expressed in T lymphocytes. The expression in granulosa cells of antral follicles is induced by luteinizing hormone. Expressed in chondrocytes and osteoblasts (at protein level).

The protein resides in the nucleus. It is found in the cytoplasm. Its function is as follows. Important transcription factor regulating the expression of genes involved in immune and inflammatory responses. Also plays a significant role in adipogenesis, as well as in the gluconeogenic pathway, liver regeneration, and hematopoiesis. The consensus recognition site is 5'-T[TG]NNGNAA[TG]-3'. Its functional capacity is governed by protein interactions and post-translational protein modifications. During early embryogenesis, plays essential and redundant roles with CEBPA. Has a promitotic effect on many cell types such as hepatocytes and adipocytes but has an antiproliferative effect on T-cells by repressing MYC expression, facilitating differentiation along the T-helper 2 lineage. Binds to regulatory regions of several acute-phase and cytokines genes and plays a role in the regulation of acute-phase reaction and inflammation. Also plays a role in intracellular bacteria killing. During adipogenesis, is rapidly expressed and, after activation by phosphorylation, induces CEBPA and PPARG, which turn on the series of adipocyte genes that give rise to the adipocyte phenotype. The delayed transactivation of the CEBPA and PPARG genes by CEBPB appears necessary to allow mitotic clonal expansion and thereby progression of terminal differentiation. Essential for female reproduction because of a critical role in ovarian follicle development. Restricts osteoclastogenesis. Together with NFE2L1; represses expression of DSPP during odontoblast differentiation. Essential for gene expression induction in activated macrophages. Plays a major role in immune responses such as CD4(+) T-cell response, granuloma formation and endotoxin shock. Not essential for intracellular bacteria killing. In terms of biological role, acts as a dominant negative through heterodimerization with isoform 2. Promotes osteoblast differentiation and osteoclastogenesis. The polypeptide is CCAAT/enhancer-binding protein beta (Mus musculus (Mouse)).